Reading from the N-terminus, the 260-residue chain is Exosome complex component Rrp42 (260 aa).

It belongs to the RNase PH family. Rrp42 subfamily. As to quaternary structure, component of the archaeal exosome complex. Forms a hexameric ring-like arrangement composed of 3 Rrp41-Rrp42 heterodimers. The hexameric ring associates with a trimer of Rrp4 and/or Csl4 subunits.

It is found in the cytoplasm. Non-catalytic component of the exosome, which is a complex involved in RNA degradation. Contributes to the structuring of the Rrp41 active site. The chain is Exosome complex component Rrp42 from Thermoplasma acidophilum (strain ATCC 25905 / DSM 1728 / JCM 9062 / NBRC 15155 / AMRC-C165).